The sequence spans 85 residues: Large ribosomal subunit protein bL27 (85 aa).

This sequence belongs to the bacterial ribosomal protein bL27 family.

The polypeptide is Large ribosomal subunit protein bL27 (Stutzerimonas stutzeri (strain A1501) (Pseudomonas stutzeri)).